The primary structure comprises 484 residues: Malonate-semialdehyde dehydrogenase 2 (484 aa).

Positions 153, 177, 180, 181, 230, and 252 each coordinate NAD(+). Catalysis depends on Cys-285, which acts as the Nucleophile. Glu-385 lines the NAD(+) pocket.

Belongs to the aldehyde dehydrogenase family. IolA subfamily. In terms of assembly, homotetramer.

The enzyme catalyses 3-oxopropanoate + NAD(+) + CoA + H2O = hydrogencarbonate + acetyl-CoA + NADH + H(+). It carries out the reaction 2-methyl-3-oxopropanoate + NAD(+) + CoA + H2O = propanoyl-CoA + hydrogencarbonate + NADH + H(+). The protein operates within polyol metabolism; myo-inositol degradation into acetyl-CoA; acetyl-CoA from myo-inositol: step 7/7. In terms of biological role, catalyzes the oxidation of malonate semialdehyde (MSA) and methylmalonate semialdehyde (MMSA) into acetyl-CoA and propanoyl-CoA, respectively. Is involved in a myo-inositol catabolic pathway. Bicarbonate, and not CO2, is the end-product of the enzymatic reaction. This is Malonate-semialdehyde dehydrogenase 2 from Geobacillus kaustophilus (strain HTA426).